Here is a 275-residue protein sequence, read N- to C-terminus: 4-hydroxy-tetrahydrodipicolinate reductase (275 aa).

NAD(+)-binding positions include 13–18 (GAAGKM), 108–110 (GTT), and 134–137 (VPNF). His164 (proton donor/acceptor) is an active-site residue. His165 serves as a coordination point for (S)-2,3,4,5-tetrahydrodipicolinate. The active-site Proton donor is Lys168. 174-175 (GT) is a binding site for (S)-2,3,4,5-tetrahydrodipicolinate.

This sequence belongs to the DapB family.

Its subcellular location is the cytoplasm. The enzyme catalyses (S)-2,3,4,5-tetrahydrodipicolinate + NAD(+) + H2O = (2S,4S)-4-hydroxy-2,3,4,5-tetrahydrodipicolinate + NADH + H(+). It carries out the reaction (S)-2,3,4,5-tetrahydrodipicolinate + NADP(+) + H2O = (2S,4S)-4-hydroxy-2,3,4,5-tetrahydrodipicolinate + NADPH + H(+). It participates in amino-acid biosynthesis; L-lysine biosynthesis via DAP pathway; (S)-tetrahydrodipicolinate from L-aspartate: step 4/4. Catalyzes the conversion of 4-hydroxy-tetrahydrodipicolinate (HTPA) to tetrahydrodipicolinate. The protein is 4-hydroxy-tetrahydrodipicolinate reductase of Gloeothece citriformis (strain PCC 7424) (Cyanothece sp. (strain PCC 7424)).